Consider the following 274-residue polypeptide: Glutamate racemase (274 aa).

Residues 9–10 and 41–42 contribute to the substrate site; these read DS and YG. Cys73 serves as the catalytic Proton donor/acceptor. Residue 74–75 coordinates substrate; it reads NT. The active-site Proton donor/acceptor is the Cys183. Position 184-185 (184-185) interacts with substrate; the sequence is TH.

This sequence belongs to the aspartate/glutamate racemases family.

It carries out the reaction L-glutamate = D-glutamate. It participates in cell wall biogenesis; peptidoglycan biosynthesis. Provides the (R)-glutamate required for cell wall biosynthesis. The protein is Glutamate racemase of Shewanella baltica (strain OS155 / ATCC BAA-1091).